Consider the following 324-residue polypeptide: tRNA dimethylallyltransferase (324 aa).

Residue Gly15 to Ser22 coordinates ATP. Thr17 to Ser22 lines the substrate pocket. Residues Asp40–Gln43 are interaction with substrate tRNA.

It belongs to the IPP transferase family. In terms of assembly, monomer. The cofactor is Mg(2+).

It carries out the reaction adenosine(37) in tRNA + dimethylallyl diphosphate = N(6)-dimethylallyladenosine(37) in tRNA + diphosphate. Catalyzes the transfer of a dimethylallyl group onto the adenine at position 37 in tRNAs that read codons beginning with uridine, leading to the formation of N6-(dimethylallyl)adenosine (i(6)A). The sequence is that of tRNA dimethylallyltransferase from Moorella thermoacetica (strain ATCC 39073 / JCM 9320).